A 348-amino-acid chain; its full sequence is GMP reductase (348 aa).

108 to 131 is an NADP(+) binding site; sequence ADFQKTKDVMALSDELIFICIDIA. K(+)-binding residues include glycine 181 and glycine 183. Cysteine 186 serves as the catalytic Thioimidate intermediate. Position 216–239 (216–239) interacts with NADP(+); it reads IIGDGGCACAGDVAKAFGGGADFV.

The protein belongs to the IMPDH/GMPR family. GuaC type 1 subfamily. Homotetramer.

The catalysed reaction is IMP + NH4(+) + NADP(+) = GMP + NADPH + 2 H(+). Functionally, catalyzes the irreversible NADPH-dependent deamination of GMP to IMP. It functions in the conversion of nucleobase, nucleoside and nucleotide derivatives of G to A nucleotides, and in maintaining the intracellular balance of A and G nucleotides. The protein is GMP reductase of Vibrio vulnificus (strain CMCP6).